Here is a 470-residue protein sequence, read N- to C-terminus: MLDKEVLVIGAGLAGSEAAWQLANSGVPVKLVEMRPIKSTPAHHTSEFGELVCSNSFGALSPDRAAGLLQKELRFFKSLIVQTADKFAVPAGGALAVDRSKFSYALTEQLSNHPLVEIKRFEQLDIPSEENITILATGPLTADDLSYKIQDFTGIDDCHFFDAASPIIYGDSIDQEIVFKASRYDKGDPAYLNCPMDENKYIHFRNELIEGEQANLKDFEKESANFFEACLPIEEIARRGVDTMRYGPLKSIGLWNPKWGDLFDRENRLKKRPHAVVQLRKEDLEGKLLNMVGFQTNLKWSEQKRIFRMIPGLEKAEFVRFGVMHRNTFLESPKLLLPTLQFMKRENLFAAGQITGTEGYAAAAAGGLLAGINASLLAKGKKPVSFPDESMIGSLMNFISNKNQILSNQKKNKFQPMPASFGLVPELTKRIKDKRLRYKAYQERSTEALNDFKNKLDSCFDKDHLLSKIY.

10–15 (GAGLAG) contributes to the FAD binding site.

It belongs to the MnmG family. TrmFO subfamily. FAD serves as cofactor.

It localises to the cytoplasm. The catalysed reaction is uridine(54) in tRNA + (6R)-5,10-methylene-5,6,7,8-tetrahydrofolate + NADH + H(+) = 5-methyluridine(54) in tRNA + (6S)-5,6,7,8-tetrahydrofolate + NAD(+). The enzyme catalyses uridine(54) in tRNA + (6R)-5,10-methylene-5,6,7,8-tetrahydrofolate + NADPH + H(+) = 5-methyluridine(54) in tRNA + (6S)-5,6,7,8-tetrahydrofolate + NADP(+). In terms of biological role, catalyzes the folate-dependent formation of 5-methyl-uridine at position 54 (M-5-U54) in all tRNAs. This chain is Methylenetetrahydrofolate--tRNA-(uracil-5-)-methyltransferase TrmFO, found in Prochlorococcus marinus (strain MIT 9301).